Here is a 42-residue protein sequence, read N- to C-terminus: Potassium channel toxin gamma-KTx 1.4 (42 aa).

Disulfide bonds link C5/C23, C11/C34, C20/C39, and C24/C41.

This sequence belongs to the ergtoxin family. Gamma-KTx 1 subfamily. As to expression, expressed by the venom gland.

The protein resides in the secreted. Blocks Kv11/ERG potassium channels. The polypeptide is Potassium channel toxin gamma-KTx 1.4 (Centruroides sculpturatus (Arizona bark scorpion)).